We begin with the raw amino-acid sequence, 339 residues long: Lipoyl synthase (339 aa).

The disordered stretch occupies residues 13 to 35 (RPKLDAPARPRHPEKAHRPDTAI). [4Fe-4S] cluster contacts are provided by cysteine 68, cysteine 73, cysteine 79, cysteine 94, cysteine 98, cysteine 101, and serine 307. Residues 80–296 (WEKRHATFMI…ETTAYAKGFL (217 aa)) form the Radical SAM core domain.

The protein belongs to the radical SAM superfamily. Lipoyl synthase family. Requires [4Fe-4S] cluster as cofactor.

Its subcellular location is the cytoplasm. It catalyses the reaction [[Fe-S] cluster scaffold protein carrying a second [4Fe-4S](2+) cluster] + N(6)-octanoyl-L-lysyl-[protein] + 2 oxidized [2Fe-2S]-[ferredoxin] + 2 S-adenosyl-L-methionine + 4 H(+) = [[Fe-S] cluster scaffold protein] + N(6)-[(R)-dihydrolipoyl]-L-lysyl-[protein] + 4 Fe(3+) + 2 hydrogen sulfide + 2 5'-deoxyadenosine + 2 L-methionine + 2 reduced [2Fe-2S]-[ferredoxin]. It participates in protein modification; protein lipoylation via endogenous pathway; protein N(6)-(lipoyl)lysine from octanoyl-[acyl-carrier-protein]: step 2/2. Its function is as follows. Catalyzes the radical-mediated insertion of two sulfur atoms into the C-6 and C-8 positions of the octanoyl moiety bound to the lipoyl domains of lipoate-dependent enzymes, thereby converting the octanoylated domains into lipoylated derivatives. The chain is Lipoyl synthase from Methylorubrum extorquens (strain PA1) (Methylobacterium extorquens).